Reading from the N-terminus, the 106-residue chain is PTS system N,N'-diacetylchitobiose-specific EIIB component (106 aa).

Residues K3–N106 enclose the PTS EIIB type-3 domain. Catalysis depends on C10, which acts as the Phosphocysteine intermediate. C10 bears the Phosphocysteine; by EIIA mark.

Forms a complex with ChbA (EIIA). ChbB is a monomer in both its unphosphorylated and phosphorylated forms.

It is found in the cytoplasm. It carries out the reaction N,N'-diacetylchitobiose(out) + N(pros)-phospho-L-histidyl-[protein] = diacetylchitobiose-6'-phosphate(in) + L-histidyl-[protein]. In terms of biological role, the phosphoenolpyruvate-dependent sugar phosphotransferase system (sugar PTS), a major carbohydrate active transport system, catalyzes the phosphorylation of incoming sugar substrates concomitantly with their translocation across the cell membrane. The enzyme II ChbABC PTS system is involved in the transport of the chitin disaccharide N,N'-diacetylchitobiose (GlcNAc2). This chain is PTS system N,N'-diacetylchitobiose-specific EIIB component (chbB), found in Escherichia coli O157:H7.